The primary structure comprises 178 residues: 2-C-methyl-D-erythritol 2,4-cyclodiphosphate synthase (178 aa).

A divalent metal cation contacts are provided by D24, H26, and H61. 24–26 lines the 4-CDP-2-C-methyl-D-erythritol 2-phosphate pocket; that stretch reads DSH. 150-153 contributes to the 4-CDP-2-C-methyl-D-erythritol 2-phosphate binding site; sequence TSGE.

This sequence belongs to the IspF family. As to quaternary structure, homotrimer. A divalent metal cation is required as a cofactor.

The catalysed reaction is 4-CDP-2-C-methyl-D-erythritol 2-phosphate = 2-C-methyl-D-erythritol 2,4-cyclic diphosphate + CMP. It functions in the pathway isoprenoid biosynthesis; isopentenyl diphosphate biosynthesis via DXP pathway; isopentenyl diphosphate from 1-deoxy-D-xylulose 5-phosphate: step 4/6. Functionally, involved in the biosynthesis of isopentenyl diphosphate (IPP) and dimethylallyl diphosphate (DMAPP), two major building blocks of isoprenoid compounds. Catalyzes the conversion of 4-diphosphocytidyl-2-C-methyl-D-erythritol 2-phosphate (CDP-ME2P) to 2-C-methyl-D-erythritol 2,4-cyclodiphosphate (ME-CPP) with a corresponding release of cytidine 5-monophosphate (CMP). This Chlamydia trachomatis serovar A (strain ATCC VR-571B / DSM 19440 / HAR-13) protein is 2-C-methyl-D-erythritol 2,4-cyclodiphosphate synthase.